An 882-amino-acid chain; its full sequence is Isoamylase 2, chloroplastic (882 aa).

Residues 1-70 constitute a chloroplast transit peptide; that stretch reads MAAWSPSVGI…LQSYQFSKIC (70 aa).

It belongs to the glycosyl hydrolase 13 family. In terms of assembly, associates with ISA1 to form the heteromultimeric complex Iso1 required for amylopectin synthesis.

It localises to the plastid. The protein localises to the chloroplast. The protein operates within glycan biosynthesis; starch biosynthesis. Functionally, involved in the trimming of pre-amylopectin chains. Accelerates the crystallization of nascent amylopectin molecules during starch synthesis. ISA1 and ISA2 work exclusively together as a multimeric holoenzyme. ISA1-ISA2 removes preferentially branches that are very close to other branches. The protein is Isoamylase 2, chloroplastic (ISA2) of Arabidopsis thaliana (Mouse-ear cress).